The following is a 334-amino-acid chain: Tryptophan--tRNA ligase (334 aa).

Residues 11 to 13 (QPT) and 19 to 20 (GN) contribute to the ATP site. The short motif at 12 to 20 (PTGKLTIGN) is the 'HIGH' region element. Asp-135 contacts L-tryptophan. ATP-binding positions include 147–149 (GED), Ile-186, and 195–199 (KMSKS). The 'KMSKS' region motif lies at 195-199 (KMSKS).

This sequence belongs to the class-I aminoacyl-tRNA synthetase family. As to quaternary structure, homodimer.

The protein resides in the cytoplasm. The enzyme catalyses tRNA(Trp) + L-tryptophan + ATP = L-tryptophyl-tRNA(Trp) + AMP + diphosphate + H(+). Functionally, catalyzes the attachment of tryptophan to tRNA(Trp). This is Tryptophan--tRNA ligase from Blochmanniella floridana.